A 648-amino-acid chain; its full sequence is Acetyl-coenzyme A synthetase (648 aa).

CoA contacts are provided by residues 190–193 and T310; that span reads RGGR. ATP contacts are provided by residues 386–388, 410–415, D499, and R514; these read GEP and DTWWQT. S522 serves as a coordination point for CoA. R525 is an ATP binding site. Positions 536, 538, and 541 each coordinate Mg(2+). R583 serves as a coordination point for CoA. K608 bears the N6-acetyllysine mark.

This sequence belongs to the ATP-dependent AMP-binding enzyme family. Mg(2+) serves as cofactor. Acetylated. Deacetylation by the SIR2-homolog deacetylase activates the enzyme.

The catalysed reaction is acetate + ATP + CoA = acetyl-CoA + AMP + diphosphate. In terms of biological role, catalyzes the conversion of acetate into acetyl-CoA (AcCoA), an essential intermediate at the junction of anabolic and catabolic pathways. AcsA undergoes a two-step reaction. In the first half reaction, AcsA combines acetate with ATP to form acetyl-adenylate (AcAMP) intermediate. In the second half reaction, it can then transfer the acetyl group from AcAMP to the sulfhydryl group of CoA, forming the product AcCoA. In Methylobacterium radiotolerans (strain ATCC 27329 / DSM 1819 / JCM 2831 / NBRC 15690 / NCIMB 10815 / 0-1), this protein is Acetyl-coenzyme A synthetase.